Here is a 150-residue protein sequence, read N- to C-terminus: MDLSGKMVKQVEILSDGIVFYEIFRYRLYLISEMSPVNIQGVDLLEGNWGTVGSVIFFKYTIDGKEKTAKDIVEAIDEETKSVTFKIVEGDLMELYKTFIIIVQVDTKGEHNSVTWTFHYEKLKEDVEEPNTLMNFCIEITKDIETYHLK.

Position 1 is an N-acetylmethionine (M1).

The protein belongs to the MLP family. Monomer. The N-terminus is blocked.

This is Kirola from Actinidia deliciosa (Kiwi).